The sequence spans 201 residues: Recombination protein RecR (201 aa).

Residues 60–75 form a C4-type zinc finger; that stretch reads CKTCGNIDTQNPCTVC. Residues 83 to 178 enclose the Toprim domain; that stretch reads AIIVVVADVA…KVTRLAHGVP (96 aa).

The protein belongs to the RecR family.

In terms of biological role, may play a role in DNA repair. It seems to be involved in an RecBC-independent recombinational process of DNA repair. It may act with RecF and RecO. The sequence is that of Recombination protein RecR from Rhodopseudomonas palustris (strain BisA53).